The primary structure comprises 327 residues: GTPase Obg (327 aa).

Residues 2-160 form the Obg domain; that stretch reads HLFKDSLNLI…LNLRLELSLI (159 aa). The region spanning 161-326 is the OBG-type G domain; it reads ADIGLVGLPN…LVSEFFSLVK (166 aa). Residues 167–174, 192–196, 213–216, 280–283, and 307–309 each bind GTP; these read GLPNAGKS, FTTKI, DLPG, SKLD, and SIY. The Mg(2+) site is built by serine 174 and threonine 194.

The protein belongs to the TRAFAC class OBG-HflX-like GTPase superfamily. OBG GTPase family. As to quaternary structure, monomer. It depends on Mg(2+) as a cofactor.

It is found in the cytoplasm. An essential GTPase which binds GTP, GDP and possibly (p)ppGpp with moderate affinity, with high nucleotide exchange rates and a fairly low GTP hydrolysis rate. Plays a role in control of the cell cycle, stress response, ribosome biogenesis and in those bacteria that undergo differentiation, in morphogenesis control. This Borrelia duttonii (strain Ly) protein is GTPase Obg.